The chain runs to 396 residues: Phosphoglycerate kinase (396 aa).

Residues 22-24 (DLN), Arg-37, 60-63 (HFGR), Arg-118, and Arg-151 contribute to the substrate site. Residues Lys-201, Glu-323, and 353-356 (GGDT) contribute to the ATP site.

The protein belongs to the phosphoglycerate kinase family. In terms of assembly, monomer.

It is found in the cytoplasm. The catalysed reaction is (2R)-3-phosphoglycerate + ATP = (2R)-3-phospho-glyceroyl phosphate + ADP. The protein operates within carbohydrate degradation; glycolysis; pyruvate from D-glyceraldehyde 3-phosphate: step 2/5. This Xanthobacter autotrophicus (strain ATCC BAA-1158 / Py2) protein is Phosphoglycerate kinase.